Reading from the N-terminus, the 224-residue chain is 2-C-methyl-D-erythritol 4-phosphate cytidylyltransferase (224 aa).

It belongs to the IspD/TarI cytidylyltransferase family. IspD subfamily.

The catalysed reaction is 2-C-methyl-D-erythritol 4-phosphate + CTP + H(+) = 4-CDP-2-C-methyl-D-erythritol + diphosphate. It functions in the pathway isoprenoid biosynthesis; isopentenyl diphosphate biosynthesis via DXP pathway; isopentenyl diphosphate from 1-deoxy-D-xylulose 5-phosphate: step 2/6. Catalyzes the formation of 4-diphosphocytidyl-2-C-methyl-D-erythritol from CTP and 2-C-methyl-D-erythritol 4-phosphate (MEP). The protein is 2-C-methyl-D-erythritol 4-phosphate cytidylyltransferase of Bordetella petrii (strain ATCC BAA-461 / DSM 12804 / CCUG 43448).